Reading from the N-terminus, the 277-residue chain is Undecaprenyl-diphosphatase 1 (277 aa).

7 consecutive transmembrane segments (helical) span residues 46 to 66 (VVGF…VYFF), 95 to 115 (WWVI…KSLI), 119 to 139 (LASL…MWAA), 165 to 185 (ILAL…TALI), 191 to 211 (VAAT…AGLY), 216 to 236 (ALGT…SFVV), and 256 to 276 (FVIY…TGVL).

The protein belongs to the UppP family.

It localises to the cell membrane. It catalyses the reaction di-trans,octa-cis-undecaprenyl diphosphate + H2O = di-trans,octa-cis-undecaprenyl phosphate + phosphate + H(+). Catalyzes the dephosphorylation of undecaprenyl diphosphate (UPP). Confers resistance to bacitracin. The protein is Undecaprenyl-diphosphatase 1 of Streptomyces avermitilis (strain ATCC 31267 / DSM 46492 / JCM 5070 / NBRC 14893 / NCIMB 12804 / NRRL 8165 / MA-4680).